The chain runs to 110 residues: Putative anti-sigma factor antagonist TM_1442 (110 aa).

In terms of domain architecture, STAS spans 4–110; the sequence is LKLDIVEQDD…FKITDTVEEA (107 aa). Serine 59 is subject to Phosphoserine.

This sequence belongs to the anti-sigma-factor antagonist family. Post-translationally, phosphorylated on a serine residue.

Functionally, in the phosphorylated form it could act as an anti-anti-sigma factor that counteracts an anti-sigma factor and thus releases a sigma factor from inhibition. This is Putative anti-sigma factor antagonist TM_1442 from Thermotoga maritima (strain ATCC 43589 / DSM 3109 / JCM 10099 / NBRC 100826 / MSB8).